A 1077-amino-acid polypeptide reads, in one-letter code: Insulin receptor substrate 2-B (1077 aa).

The disordered stretch occupies residues 1–66; that stretch reads MAGVLCPTEE…APASTAEDDV (66 aa). 2 consecutive short sequence motifs (YXXM motif) follow at residues 33–36 and 147–150; these read YRRM and YFAM. A PH domain is found at 65–170; sequence DVRKRGYLRK…WYQALSELIN (106 aa). The 105-residue stretch at 195 to 299 folds into the IRS-type PTB domain; it reads FKEVWQVNVK…DTMKALKAYS (105 aa). 3 disordered regions span residues 342 to 373, 428 to 464, and 476 to 495; these read ETVV…RPFR, VCSS…SDEY, and VRSN…EENT. Composition is skewed to polar residues over residues 350–364 and 428–444; these read SAKN…SSEG and VCSS…LTRP. The span at 445–457 shows a compositional bias: low complexity; sequence SSSSVCGSPSDGG. Polar residues predominate over residues 477–495; sequence RSNTPDSLGNTPPIQEENT. Positions 499-502 match the YXXM motif 3 motif; it reads YMSM. Positions 530–544 are enriched in polar residues; it reads KPTNAASQQKSQTAV. The tract at residues 530 to 571 is disordered; the sequence is KPTNAASQQKSQTAVSLDEDSEETNKQFAYAESPKLKDSSHV. 6 consecutive short sequence motifs (YXXM motif) follow at residues 595 to 598, 608 to 611, 634 to 637, 666 to 669, 713 to 716, and 891 to 894; these read YMPM, YLPM, YMMM, YMDM, YVPM, and YTTM.

Post-translationally, phosphorylated by INSR.

Its function is as follows. Potentiates insulin signaling. The polypeptide is Insulin receptor substrate 2-B (irs2-b) (Xenopus laevis (African clawed frog)).